The chain runs to 91 residues: MAVSKTTMLIVLVAIILSCVSISNARQMQRPQNVECVGGECQPKHPQQYFGSCFRDSDCRNSCFPYCRYQKCHHHECICSLCSSEVAPSPK.

Residues 1–25 (MAVSKTTMLIVLVAIILSCVSISNA) form the signal peptide. 4 cysteine pairs are disulfide-bonded: Cys-41-Cys-82, Cys-53-Cys-72, Cys-59-Cys-77, and Cys-63-Cys-79.

The protein belongs to the DEFL family.

Its subcellular location is the secreted. In Arabidopsis thaliana (Mouse-ear cress), this protein is Defensin-like protein 269.